The following is a 119-amino-acid chain: Beta-2-microglobulin (119 aa).

The signal sequence occupies residues 1–20; sequence MARFVVVALLALLSLSGLEA. Residues 25–114 enclose the Ig-like C1-type domain; the sequence is PKIQVYSRHP…VTFPTPKTVK (90 aa). Residues C45 and C100 are joined by a disulfide bond.

It belongs to the beta-2-microglobulin family. In terms of assembly, heterodimer of an alpha chain and a beta chain. Beta-2-microglobulin is the beta-chain of major histocompatibility complex class I molecules.

Its subcellular location is the secreted. Its function is as follows. Component of the class I major histocompatibility complex (MHC). Involved in the presentation of peptide antigens to the immune system. The polypeptide is Beta-2-microglobulin (B2M) (Alouatta seniculus (Red howler monkey)).